Reading from the N-terminus, the 162-residue chain is MSRIVSVGISEFKIASAPTILMTYGLGSCVGIALHDPVALTGGLAHTLLPAPVRGMDSMVKSAKFTCWAVDLMVEELIKCGCVAERLVAKLAGGATMFEPQHRTTHSGIGERNVTAAKEALERRGIPLVASDTGDDYGRSLEFNTVTGVITVRALQRPIKRM.

The protein belongs to the CheD family.

The catalysed reaction is L-glutaminyl-[protein] + H2O = L-glutamyl-[protein] + NH4(+). In terms of biological role, probably deamidates glutamine residues to glutamate on methyl-accepting chemotaxis receptors (MCPs), playing an important role in chemotaxis. This chain is Probable chemoreceptor glutamine deamidase CheD 3, found in Geobacter sulfurreducens (strain ATCC 51573 / DSM 12127 / PCA).